The sequence spans 329 residues: Putative glucose ABC transporter permease protein TsgC13 (329 aa).

7 helical membrane-spanning segments follow: residues phenylalanine 3–leucine 23, glycine 32–valine 52, tryptophan 60–leucine 80, valine 89–glycine 109, alanine 139–leucine 161, leucine 193–phenylalanine 213, and leucine 216–alanine 236.

It belongs to the binding-protein-dependent transport system permease family. The complex is composed of two ATP-binding proteins (TsgD13), two transmembrane proteins (TsgB13 and TsgC13) and a solute-binding protein (TsgA13).

It is found in the cell membrane. Part of an ABC transporter complex involved in glucose import (Potential). Responsible for the translocation of the substrate across the membrane. This is Putative glucose ABC transporter permease protein TsgC13 (tsgC13) from Haloferax volcanii (strain ATCC 29605 / DSM 3757 / JCM 8879 / NBRC 14742 / NCIMB 2012 / VKM B-1768 / DS2) (Halobacterium volcanii).